The chain runs to 322 residues: Olfactory receptor 1J1 (322 aa).

Residues 1–25 (MSPENQSSVSEFLLLGLPIRPEQQA) are Extracellular-facing. Asn5 is a glycosylation site (N-linked (GlcNAc...) asparagine). Residues 26-49 (VFFALFLGMYLTTVLGNLLIMLLI) form a helical membrane-spanning segment. The Cytoplasmic segment spans residues 50-57 (QLDSHLHT). A helical membrane pass occupies residues 58–79 (PMYFFLSHLALTDISFSSVTVP). Residues 80–100 (KMLMNMQTQHLAVFYKGCISQ) lie on the Extracellular side of the membrane. Cys97 and Cys189 are disulfide-bonded. A helical transmembrane segment spans residues 101–120 (TYFFIFFADLDSFLITSMAY). Residues 121–139 (DRYVAICHPLHYATIMTQS) are Cytoplasmic-facing. A helical transmembrane segment spans residues 140–158 (QCVMLVAGSWVIACACALL). The Extracellular segment spans residues 159-196 (HTLLLAQLSFCADHIIPHYFCDLGALLKLSCSDTSLNQ). A helical membrane pass occupies residues 197–219 (LAIFTAALTAIMLPFLCILVSYG). At 220–236 (HIGVTILQIPSTKGICK) the chain is on the cytoplasmic side. Residues 237 to 259 (ALSTCGSHLSVVTIYYRTIIGLY) traverse the membrane as a helical segment. Topologically, residues 260 to 272 (FLPPSSNTNDKNI) are extracellular. A helical membrane pass occupies residues 273–292 (IASVIYTAVTPMLNPFIYSL). Residues 293-322 (RNKDIKGALRKLLSRSGAVAHACNLNTLGG) are Cytoplasmic-facing.

This sequence belongs to the G-protein coupled receptor 1 family.

It is found in the cell membrane. Functionally, odorant receptor. The sequence is that of Olfactory receptor 1J1 from Homo sapiens (Human).